The sequence spans 509 residues: ATP synthase subunit alpha (509 aa).

An ATP-binding site is contributed by 169–176 (GDRQTGKT).

The protein belongs to the ATPase alpha/beta chains family. As to quaternary structure, F-type ATPases have 2 components, CF(1) - the catalytic core - and CF(0) - the membrane proton channel. CF(1) has five subunits: alpha(3), beta(3), gamma(1), delta(1), epsilon(1). CF(0) has three main subunits: a(1), b(2) and c(9-12). The alpha and beta chains form an alternating ring which encloses part of the gamma chain. CF(1) is attached to CF(0) by a central stalk formed by the gamma and epsilon chains, while a peripheral stalk is formed by the delta and b chains.

Its subcellular location is the cell inner membrane. The catalysed reaction is ATP + H2O + 4 H(+)(in) = ADP + phosphate + 5 H(+)(out). In terms of biological role, produces ATP from ADP in the presence of a proton gradient across the membrane. The alpha chain is a regulatory subunit. The sequence is that of ATP synthase subunit alpha from Mesorhizobium japonicum (strain LMG 29417 / CECT 9101 / MAFF 303099) (Mesorhizobium loti (strain MAFF 303099)).